The primary structure comprises 369 residues: Anhydro-N-acetylmuramic acid kinase (369 aa).

12-19 serves as a coordination point for ATP; sequence GTSMDGVD.

This sequence belongs to the anhydro-N-acetylmuramic acid kinase family.

The enzyme catalyses 1,6-anhydro-N-acetyl-beta-muramate + ATP + H2O = N-acetyl-D-muramate 6-phosphate + ADP + H(+). It participates in amino-sugar metabolism; 1,6-anhydro-N-acetylmuramate degradation. It functions in the pathway cell wall biogenesis; peptidoglycan recycling. Functionally, catalyzes the specific phosphorylation of 1,6-anhydro-N-acetylmuramic acid (anhMurNAc) with the simultaneous cleavage of the 1,6-anhydro ring, generating MurNAc-6-P. Is required for the utilization of anhMurNAc either imported from the medium or derived from its own cell wall murein, and thus plays a role in cell wall recycling. This is Anhydro-N-acetylmuramic acid kinase from Shewanella baltica (strain OS223).